The sequence spans 250 residues: Kv channel-interacting protein 4 (250 aa).

The segment at 2-44 (NVRRVESISAQLEEASSTGGFLYAQNSTKRSIKERLMKLLPCS) is KIS. Phosphoserine is present on residues Ser17 and Ser56. An EF-hand 1; degenerate domain is found at 61 to 117 (LEMATVRHRPEALELLEAQSKFTKKELQILYRGFKNECPSGVVNEETFKEIYSQFFP). 3 EF-hand domains span residues 120-155 (DSTT…LLRG), 156-191 (TVQE…IYDM), and 204-239 (APRQ…DENI). Positions 133, 135, 137, 144, 169, 171, 173, 175, 180, 217, 219, 221, and 228 each coordinate Ca(2+). The interval 237-250 (ENIMRSMQLFENVI) is interaction with KCND2.

It belongs to the recoverin family. In terms of assembly, component of heteromultimeric potassium channels. Identified in potassium channel complexes containing KCND1, KCND2, KCND3, KCNIP1, KCNIP2, KCNIP3, KCNIP4, DPP6 and DPP10. Interacts with KCND2. Interacts with KCND3. Interacts with the C-terminus of PSEN2 and probably PSEN1.

The protein localises to the cell membrane. It is found in the cytoplasm. It localises to the peroxisome. Its function is as follows. Regulatory subunit of Kv4/D (Shal)-type voltage-gated rapidly inactivating A-type potassium channels. Modulates KCND2 channel density, inactivation kinetics and rate of recovery from inactivation in a calcium-dependent and isoform-specific manner. Modulates KCND3/Kv4.3 currents. Isoform 4 does not increase KCND2 expression at the cell membrane. Isoform 4 retains KCND3 in the endoplasmic reticulum and negatively regulates its expression at the cell membrane. The polypeptide is Kv channel-interacting protein 4 (KCNIP4) (Macaca fascicularis (Crab-eating macaque)).